The chain runs to 219 residues: Probable nicotinate-nucleotide adenylyltransferase (219 aa).

It belongs to the NadD family.

The enzyme catalyses nicotinate beta-D-ribonucleotide + ATP + H(+) = deamido-NAD(+) + diphosphate. The protein operates within cofactor biosynthesis; NAD(+) biosynthesis; deamido-NAD(+) from nicotinate D-ribonucleotide: step 1/1. Its function is as follows. Catalyzes the reversible adenylation of nicotinate mononucleotide (NaMN) to nicotinic acid adenine dinucleotide (NaAD). This chain is Probable nicotinate-nucleotide adenylyltransferase, found in Cronobacter sakazakii (strain ATCC BAA-894) (Enterobacter sakazakii).